We begin with the raw amino-acid sequence, 374 residues long: Isopentenyl-diphosphate delta-isomerase (374 aa).

Arginine 13–lysine 14 is a substrate binding site. FMN is bound by residues glycine 71–threonine 73, serine 104, and asparagine 132. Serine 104–arginine 106 contributes to the substrate binding site. Residue glutamine 171 participates in substrate binding. Glutamate 172 lines the Mg(2+) pocket. Residues lysine 203, threonine 233, glycine 282–arginine 284, and alanine 303–leucine 304 contribute to the FMN site.

It belongs to the IPP isomerase type 2 family. Homooctamer. Dimer of tetramers. It depends on FMN as a cofactor. NADPH serves as cofactor. The cofactor is Mg(2+).

It is found in the cytoplasm. It carries out the reaction isopentenyl diphosphate = dimethylallyl diphosphate. Involved in the biosynthesis of isoprenoids. Catalyzes the 1,3-allylic rearrangement of the homoallylic substrate isopentenyl (IPP) to its allylic isomer, dimethylallyl diphosphate (DMAPP). The chain is Isopentenyl-diphosphate delta-isomerase from Thermococcus onnurineus (strain NA1).